The sequence spans 328 residues: B3 domain-containing protein At5g60140 (328 aa).

The segment at residues 13-109 (SKFFKPYLPS…FFNFSIFDHE (97 aa)) is a DNA-binding region (TF-B3). Residues 145–221 (LNSDDSDDSD…EDEDDLEDED (77 aa)) form a disordered region. Acidic residues-rich tracts occupy residues 148-182 (DDSD…AEDG) and 190-221 (GLED…EDED).

It localises to the nucleus. The chain is B3 domain-containing protein At5g60140 from Arabidopsis thaliana (Mouse-ear cress).